The primary structure comprises 231 residues: MQQYIIYLYTFLTIFGFWLALQISKRWKSMIFNTFVLTVLILAAILVIGKIPYDDYMAGNAPINNLLGLSIVALALPLYEQLRQIARQWKIILSTVVIASFLAMLSGGLLALLLGSTPEMVATVLPKSITMPIAMEVSRHLGGIPAVTAVGVVVAGLQGSIFGYLVLKKLGVKHQEAIGLSVGSVSHALGTVSCMETNPTAGSYSSISLVLCGIISSILAPFVFKLIYFFV.

6 helical membrane-spanning segments follow: residues Tyr4–Ser24, Ser29–Gly49, Ala58–Leu78, Thr95–Gly115, Val147–Leu167, and Leu211–Val231.

Belongs to the YohK (E.coli)/YwbG (IPA-22R) (B.subtilis) family.

Its subcellular location is the cell membrane. This is an uncharacterized protein from Haemophilus influenzae (strain ATCC 51907 / DSM 11121 / KW20 / Rd).